Here is a 278-residue protein sequence, read N- to C-terminus: Mediator of RNA polymerase II transcription subunit 18 (278 aa).

The protein belongs to the Mediator complex subunit 18 family. As to quaternary structure, component of the Mediator complex.

It localises to the nucleus. Component of the Mediator complex, a coactivator involved in the regulated transcription of nearly all RNA polymerase II-dependent genes. Mediator functions as a bridge to convey information from gene-specific regulatory proteins to the basal RNA polymerase II transcription machinery. Mediator is recruited to promoters by direct interactions with regulatory proteins and serves as a scaffold for the assembly of a functional preinitiation complex with RNA polymerase II and the general transcription factors. This is Mediator of RNA polymerase II transcription subunit 18 (srb5) from Aspergillus clavatus (strain ATCC 1007 / CBS 513.65 / DSM 816 / NCTC 3887 / NRRL 1 / QM 1276 / 107).